The primary structure comprises 202 residues: Pycsar effector protein PtPycTM (202 aa).

3 helical membrane passes run 60–80 (GVVL…AADI), 85–105 (LVIL…AVLA), and 181–201 (ILVG…VALG).

The protein localises to the cell membrane. Pycsar (pyrimidine cyclase system for antiphage resistance) provides immunity against bacteriophage. The pyrimidine cyclase (PycC) synthesizes cyclic nucleotides in response to infection; these serve as specific second messenger signals. The signals activate the adjacent effector, leading to bacterial cell death and abortive phage infection. A clade D Pycsar system. Functionally, the effector gene of a two-gene Pycsar system. Expression of this and adjacent uridylate cyclase PtPycC (AC A0A4V2JTK3) probably confers resistance to bacteriophage. The genes are probably only expressed in response to bacteriophage infection. Probably only responds to cUMP (produced by its cognate NTP cyclase), acts by impairing membrane integrity. This is Pycsar effector protein PtPycTM from Propioniciclava tarda.